The primary structure comprises 307 residues: Ribosomal RNA small subunit methyltransferase H (307 aa).

S-adenosyl-L-methionine is bound by residues 34 to 36 (GGH), D54, F79, D101, and Q108.

Belongs to the methyltransferase superfamily. RsmH family.

It is found in the cytoplasm. The enzyme catalyses cytidine(1402) in 16S rRNA + S-adenosyl-L-methionine = N(4)-methylcytidine(1402) in 16S rRNA + S-adenosyl-L-homocysteine + H(+). Its function is as follows. Specifically methylates the N4 position of cytidine in position 1402 (C1402) of 16S rRNA. This Ruthia magnifica subsp. Calyptogena magnifica protein is Ribosomal RNA small subunit methyltransferase H.